We begin with the raw amino-acid sequence, 446 residues long: Questin oxidase (446 aa).

This sequence belongs to the questin oxidase family.

It carries out the reaction questin + NADPH + O2 = demethylsulochrin + NADP(+). It functions in the pathway secondary metabolite biosynthesis. In terms of biological role, questin oxidase; part of the gene cluster that mediates the biosynthesis of geodin, an intermediate in the biosynthesis of other natural products. The pathway begins with the synthesis of atrochrysone thioester by the polyketide synthase (PKS) gedC. The atrochrysone carboxyl ACP thioesterase gedB then breaks the thioester bond and releases the atrochrysone carboxylic acid from gedC. The atrochrysone carboxylic acid is then converted to atrochrysone which is further transformed into emodinanthrone. The next step is performed by the emodinanthrone oxygenase gedH that catalyzes the oxidation of emodinanthrone to emodin. Emodin O-methyltransferase encoded probably by gedA then catalyzes methylation of the 8-hydroxy group of emodin to form questin. Ring cleavage of questin by questin oxidase gedK leads to desmethylsulochrin via several intermediates including questin epoxide. Another methylation step probably catalyzed by methyltransferase gedG leads to the formation of sulochrin which is further converted to dihydrogeodin by the sulochrin halogenase gedL. Finally, the dihydrogeodin oxidase gedJ catalyzes the stereospecific phenol oxidative coupling reaction converting dihydrogeodin to geodin. This Aspergillus terreus (strain NIH 2624 / FGSC A1156) protein is Questin oxidase.